We begin with the raw amino-acid sequence, 29 residues long: Pyridoxal 5'-phosphate synthase subunit PdxS (29 aa).

This sequence belongs to the PdxS/SNZ family. As to quaternary structure, in the presence of PdxT, forms a dodecamer of heterodimers.

The enzyme catalyses aldehydo-D-ribose 5-phosphate + D-glyceraldehyde 3-phosphate + L-glutamine = pyridoxal 5'-phosphate + L-glutamate + phosphate + 3 H2O + H(+). The protein operates within cofactor biosynthesis; pyridoxal 5'-phosphate biosynthesis. In terms of biological role, catalyzes the formation of pyridoxal 5'-phosphate from ribose 5-phosphate (RBP), glyceraldehyde 3-phosphate (G3P) and ammonia. The ammonia is provided by the PdxT subunit. Can also use ribulose 5-phosphate and dihydroxyacetone phosphate as substrates, resulting from enzyme-catalyzed isomerization of RBP and G3P, respectively. The polypeptide is Pyridoxal 5'-phosphate synthase subunit PdxS (Clostridium pasteurianum).